The following is a 187-amino-acid chain: Large ribosomal subunit protein uL10 (187 aa).

It belongs to the universal ribosomal protein uL10 family. Part of the ribosomal stalk of the 50S ribosomal subunit. The N-terminus interacts with L11 and the large rRNA to form the base of the stalk. The C-terminus forms an elongated spine to which L12 dimers bind in a sequential fashion forming a multimeric L10(L12)X complex.

Its function is as follows. Forms part of the ribosomal stalk, playing a central role in the interaction of the ribosome with GTP-bound translation factors. This chain is Large ribosomal subunit protein uL10, found in Synechococcus sp. (strain JA-3-3Ab) (Cyanobacteria bacterium Yellowstone A-Prime).